Consider the following 89-residue polypeptide: UPF0367 protein PCC8801_1959 (89 aa).

The protein belongs to the UPF0367 family.

The protein is UPF0367 protein PCC8801_1959 of Rippkaea orientalis (strain PCC 8801 / RF-1) (Cyanothece sp. (strain PCC 8801)).